Consider the following 251-residue polypeptide: MGYVESFYLEPEATQMFGMTESNDLPPLENLQELASVIDVNIKEPLVSDYCGLESDDIPPIYRAQLRAAQKEKIIAAEQADKSFYAYEKSDANLEGDKKEVEAIAPVDSMNFEYYVPGFSPPPQNFNDDVQKMSNFQLPKMTSIEATENVFKINGAHEKSQYVLMENEDPNKVNSPKKTGLESLISYTASDVTSTIASESSCLTATLGPAFGCLPITSTYDRHSESKYKGLSAFRPVTKSIESQYAMPELN.

This is an uncharacterized protein from Caenorhabditis elegans.